Consider the following 279-residue polypeptide: Shikimate dehydrogenase (NADP(+)) (279 aa).

Shikimate contacts are provided by residues 17–19 (SQS) and Thr64. Lys68 (proton acceptor) is an active-site residue. 2 residues coordinate shikimate: Asn89 and Asp105. Residues 130–134 (GAGGA) and Leu218 contribute to the NADP(+) site. Tyr220 contributes to the shikimate binding site. Residue Gly242 participates in NADP(+) binding.

The protein belongs to the shikimate dehydrogenase family. Homodimer.

The catalysed reaction is shikimate + NADP(+) = 3-dehydroshikimate + NADPH + H(+). Its pathway is metabolic intermediate biosynthesis; chorismate biosynthesis; chorismate from D-erythrose 4-phosphate and phosphoenolpyruvate: step 4/7. Functionally, involved in the biosynthesis of the chorismate, which leads to the biosynthesis of aromatic amino acids. Catalyzes the reversible NADPH linked reduction of 3-dehydroshikimate (DHSA) to yield shikimate (SA). The sequence is that of Shikimate dehydrogenase (NADP(+)) from Methylococcus capsulatus (strain ATCC 33009 / NCIMB 11132 / Bath).